We begin with the raw amino-acid sequence, 410 residues long: Zinc transporter ttm-1 (410 aa).

2 stretches are compositionally biased toward low complexity: residues 1–13 and 35–46; these read MTIS…SIRL and SVSSSDSGVSAD. The tract at residues 1 to 94 is disordered; sequence MTISMISPSS…GAHKHSHDEK (94 aa). Residues 1–103 are Cytoplasmic-facing; the sequence is MTISMISPSS…KYQKGRRAEK (103 aa). Positions 50-69 are enriched in basic residues; that stretch reads HHHHGHGHGHSHGGHGHSHT. The helical transmembrane segment at 104 to 124 threads the bilayer; that stretch reads VLWAVAALSAVFIAAEFVGGF. Topologically, residues 125 to 129 are extracellular; that stretch reads WAQSL. The chain crosses the membrane as a helical span at residues 130-150; the sequence is AIMTDAGHMLSDLLSFIISIF. Residues 151–171 are Cytoplasmic-facing; it reads AIRCARLPASKRLSFGYERAE. Residues 172–192 traverse the membrane as a helical segment; that stretch reads VLGALTSVIILWVLTTVLVVV. The Extracellular portion of the chain corresponds to 193 to 208; that stretch reads AIQRIVNNEHEVDADV. Residues 209–229 traverse the membrane as a helical segment; sequence MLITAGVGVLFNIVMGLVLHF. The Cytoplasmic portion of the chain corresponds to 230–258; sequence GTGGHGHTHGGHSSHGHAHDGKNVNVRAA. The chain crosses the membrane as a helical span at residues 259 to 279; that stretch reads LIHVIGDLVQSIGVLIAALII. Residue arginine 280 is a topological domain, extracellular. Residues 281–301 traverse the membrane as a helical segment; it reads FTGWTLADPICTFLFSIIVLF. Over 302–410 the chain is Cytoplasmic; it reads TTVTVMRDIF…CDTCQQQETA (109 aa).

The protein belongs to the cation diffusion facilitator (CDF) transporter (TC 2.A.4) family. SLC30A subfamily. In terms of tissue distribution, isoform a: Expressed in the hypodermis and the intestine. Isoform b: Expressed in the intestine, head neurons, seam cells, hypodermis, and the vulva.

The protein localises to the cytoplasmic vesicle membrane. It is found in the apical cell membrane. Its function is as follows. Promotes excretion of zinc from intestinal cells into the intestinal lumen in response to increased dietary zinc. Involved in cadmium resistance, possibly by promoting its transport from cells. Involved in resistance to B.thuringiensis pore-forming toxin Cry5B downstream of the sek-1 and pmk-1 MAPK kinase pathway. The protein is Zinc transporter ttm-1 of Caenorhabditis elegans.